Consider the following 337-residue polypeptide: Outer membrane protein assembly factor BamC (337 aa).

The N-terminal stretch at 1–16 is a signal peptide; sequence MKKWLFPFAFVATLAG. Cys17 carries N-palmitoyl cysteine lipidation. Residue Cys17 is the site of S-diacylglycerol cysteine attachment.

This sequence belongs to the BamC family. In terms of assembly, part of the Bam complex.

It localises to the cell outer membrane. Part of the outer membrane protein assembly complex, which is involved in assembly and insertion of beta-barrel proteins into the outer membrane. The polypeptide is Outer membrane protein assembly factor BamC (Pasteurella multocida (strain Pm70)).